The chain runs to 258 residues: Imidazole glycerol phosphate synthase subunit HisF (258 aa).

Catalysis depends on residues Asp-11 and Asp-130.

This sequence belongs to the HisA/HisF family. Heterodimer of HisH and HisF.

The protein resides in the cytoplasm. The enzyme catalyses 5-[(5-phospho-1-deoxy-D-ribulos-1-ylimino)methylamino]-1-(5-phospho-beta-D-ribosyl)imidazole-4-carboxamide + L-glutamine = D-erythro-1-(imidazol-4-yl)glycerol 3-phosphate + 5-amino-1-(5-phospho-beta-D-ribosyl)imidazole-4-carboxamide + L-glutamate + H(+). The protein operates within amino-acid biosynthesis; L-histidine biosynthesis; L-histidine from 5-phospho-alpha-D-ribose 1-diphosphate: step 5/9. Functionally, IGPS catalyzes the conversion of PRFAR and glutamine to IGP, AICAR and glutamate. The HisF subunit catalyzes the cyclization activity that produces IGP and AICAR from PRFAR using the ammonia provided by the HisH subunit. The sequence is that of Imidazole glycerol phosphate synthase subunit HisF from Enterobacter sp. (strain 638).